The sequence spans 452 residues: Ketoisovalerate reductase BEA2 (452 aa).

70–75 (GPGNIG) contributes to the NADP(+) binding site. Lysine 285 (proton donor) is an active-site residue. Asparagine 289, asparagine 293, and serine 393 together coordinate substrate. Residue glutamate 405 coordinates NADP(+).

It belongs to the ketopantoate reductase family.

It carries out the reaction (R)-2-hydroxy-3-methylbutanoate + NADP(+) = 3-methyl-2-oxobutanoate + NADPH + H(+). Its function is as follows. Ketoisovalerate reductase; part of the gene cluster that mediates the biosynthesis of beauvericin (BEA), a non-ribosomal cyclic hexadepsipeptide that shows antibiotic, antifungal, insecticidal, and cancer cell antiproliferative and antihaptotactic activity. Ketoisovalerate reductase BEA2 catalyzes the NADPH-specific reduction of ketoisovaleric acid to hydroxyisovalerate, a precursor for beauvericin biosynthesis. The nonribosomal cyclodepsipeptide synthetase BEA1 then catalyzes the formation of beauvericin via condensation and cyclization of 3 dipeptidol monomers, each composed of one unit of hydroxyisovalerate and one unit of N-methyl-phenylalanine. This Gibberella fujikuroi (strain CBS 195.34 / IMI 58289 / NRRL A-6831) (Bakanae and foot rot disease fungus) protein is Ketoisovalerate reductase BEA2.